Reading from the N-terminus, the 77-residue chain is Acyl carrier protein (77 aa).

The Carrier domain occupies Gln-3–Lys-77. An O-(pantetheine 4'-phosphoryl)serine modification is found at Ser-38.

This sequence belongs to the acyl carrier protein (ACP) family. In terms of processing, 4'-phosphopantetheine is transferred from CoA to a specific serine of apo-ACP by AcpS. This modification is essential for activity because fatty acids are bound in thioester linkage to the sulfhydryl of the prosthetic group.

Its subcellular location is the cytoplasm. It functions in the pathway lipid metabolism; fatty acid biosynthesis. Functionally, carrier of the growing fatty acid chain in fatty acid biosynthesis. This chain is Acyl carrier protein, found in Synechocystis sp. (strain ATCC 27184 / PCC 6803 / Kazusa).